Here is a 421-residue protein sequence, read N- to C-terminus: MPGNLEPLDLGIQIPYHFRCPISLDLMSDPVTISTGQTYDRTSIDSWIAMGNTTCPVTRVALSDFTLIPNHTLRRLIQEWCVANRSNGVERIPTPKQPADPISVRSLLSQASAITGTHVSVRSRAAAIRRLRGLARDSEKNRVLIAGHNAREILVRILFADIETTSLSSELVSESLALLVLLHMTETECEAVASDPSRVGFMTRLLFDSSIEIRVNAAALIEMVLTGAKSMDLKLIISGSDSIFEGVLDLLKNPISSRRALKIGIKAIFALCLVKQTRHLAISAGAPGILIDRLAADFDRCDTERGLATVELLCRLPEGCAAFGEHALTVPLMVKTILRVSDRATEYAAGALLALCTAEERCRDEAAAAGLVTQLLLLVQSDCTERAKRKAQMLLKLLRDSWPDDSTVHSDDFNRSEVAPF.

The U-box domain maps to 13–87 (QIPYHFRCPI…QEWCVANRSN (75 aa)).

It catalyses the reaction S-ubiquitinyl-[E2 ubiquitin-conjugating enzyme]-L-cysteine + [acceptor protein]-L-lysine = [E2 ubiquitin-conjugating enzyme]-L-cysteine + N(6)-ubiquitinyl-[acceptor protein]-L-lysine.. The protein operates within protein modification; protein ubiquitination. Its function is as follows. Functions as an E3 ubiquitin ligase. The protein is U-box domain-containing protein 26 (PUB26) of Arabidopsis thaliana (Mouse-ear cress).